The following is a 308-amino-acid chain: NADH-cytochrome b5 reductase 1 (308 aa).

Residues 29-49 (VASSPAFLVAAAAIVIAAAFY) form a helical membrane-spanning segment. Positions 64–167 (SIWKEFPLQK…KGPKGNFKYT (104 aa)) constitute an FAD-binding FR-type domain. FAD is bound by residues 147–162 (ASLK…GPKG) and 173–205 (HLGM…NITL).

The protein belongs to the flavoprotein pyridine nucleotide cytochrome reductase family. Monomer. Component of the 2-(3-amino-3-carboxypropyl)histidine synthase complex composed of DPH1, DPH2, DPH3 and a NADH-dependent reductase, predominantly MCR1.1. Requires FAD as cofactor.

It is found in the mitochondrion outer membrane. It catalyses the reaction 2 Fe(III)-[cytochrome b5] + NADH = 2 Fe(II)-[cytochrome b5] + NAD(+) + H(+). The catalysed reaction is 2 Fe(3+)-[Dph3] + NADH = 2 Fe(2+)-[Dph3] + NAD(+) + H(+). It participates in protein modification; peptidyl-diphthamide biosynthesis. In terms of biological role, NADH-dependent reductase for DPH3 and cytochrome b5. Required for the first step of diphthamide biosynthesis, a post-translational modification of histidine which occurs in elongation factor 2. DPH1 and DPH2 transfer a 3-amino-3-carboxypropyl (ACP) group from S-adenosyl-L-methionine (SAM) to a histidine residue, the reaction is assisted by a reduction system comprising DPH3 and a NADH-dependent reductase, predominantly MCR1.1. By reducing DPH3, also involved in the formation of the tRNA wobble base modification mcm5s 2U (5-methoxycarbonylmethyl-2-thiouridine), mediated by the elongator complex. The cytochrome b5/NADH cytochrome b5 reductase electron transfer system supports the catalytic activity of several sterol biosynthetic enzymes. This Laccaria bicolor (strain S238N-H82 / ATCC MYA-4686) (Bicoloured deceiver) protein is NADH-cytochrome b5 reductase 1 (MCR1.1).